Consider the following 351-residue polypeptide: Uroporphyrinogen decarboxylase (351 aa).

Residues 25–29 (RQAGR), aspartate 74, tyrosine 151, serine 206, and histidine 325 contribute to the substrate site.

The protein belongs to the uroporphyrinogen decarboxylase family. Homodimer.

The protein resides in the cytoplasm. The catalysed reaction is uroporphyrinogen III + 4 H(+) = coproporphyrinogen III + 4 CO2. The protein operates within porphyrin-containing compound metabolism; protoporphyrin-IX biosynthesis; coproporphyrinogen-III from 5-aminolevulinate: step 4/4. Its function is as follows. Catalyzes the decarboxylation of four acetate groups of uroporphyrinogen-III to yield coproporphyrinogen-III. This chain is Uroporphyrinogen decarboxylase, found in Chlorobium limicola (strain DSM 245 / NBRC 103803 / 6330).